We begin with the raw amino-acid sequence, 332 residues long: Fructose-1,6-bisphosphatase class 1 (332 aa).

Mg(2+) contacts are provided by Glu-89, Asp-110, Leu-112, and Asp-113. Residues 113-116 (DGSS), Asn-206, Tyr-239, 257-259 (YLY), and Lys-269 contribute to the substrate site. Glu-275 is a Mg(2+) binding site.

Belongs to the FBPase class 1 family. Homotetramer. Mg(2+) is required as a cofactor.

The protein localises to the cytoplasm. The enzyme catalyses beta-D-fructose 1,6-bisphosphate + H2O = beta-D-fructose 6-phosphate + phosphate. It functions in the pathway carbohydrate biosynthesis; gluconeogenesis. The sequence is that of Fructose-1,6-bisphosphatase class 1 from Klebsiella pneumoniae (strain 342).